The sequence spans 181 residues: NADH-quinone oxidoreductase subunit I 2 (181 aa).

2 consecutive 4Fe-4S ferredoxin-type domains span residues Leu44 to Ala74 and Arg90 to Asp119. Cys54, Cys57, Cys60, Cys64, Cys99, Cys102, Cys105, and Cys109 together coordinate [4Fe-4S] cluster.

The protein belongs to the complex I 23 kDa subunit family. In terms of assembly, NDH-1 is composed of 14 different subunits. Subunits NuoA, H, J, K, L, M, N constitute the membrane sector of the complex. [4Fe-4S] cluster serves as cofactor.

Its subcellular location is the cell membrane. The enzyme catalyses a quinone + NADH + 5 H(+)(in) = a quinol + NAD(+) + 4 H(+)(out). NDH-1 shuttles electrons from NADH, via FMN and iron-sulfur (Fe-S) centers, to quinones in the respiratory chain. The immediate electron acceptor for the enzyme in this species is believed to be menaquinone. Couples the redox reaction to proton translocation (for every two electrons transferred, four hydrogen ions are translocated across the cytoplasmic membrane), and thus conserves the redox energy in a proton gradient. The chain is NADH-quinone oxidoreductase subunit I 2 from Mycolicibacterium paratuberculosis (strain ATCC BAA-968 / K-10) (Mycobacterium paratuberculosis).